A 198-amino-acid polypeptide reads, in one-letter code: MQRVGILGGTFDPIHFAHLAIAEEARVVLGLSQVVFIPTAQQPLKQQHFSSAYQRLAMTKLAIADNPAFSVSTIEVERSGVSYTIDTIQTLHQDQPHIEWWLIVGSDSLATLSRWHAAHDLVQLAHFAILERPGFELDWPALLDQFPELAKRSVRIQGPRMDLSATELRSRLQAGLPVRYLVPDAVASYIAQQQLYLA.

The protein belongs to the NadD family.

The enzyme catalyses nicotinate beta-D-ribonucleotide + ATP + H(+) = deamido-NAD(+) + diphosphate. The protein operates within cofactor biosynthesis; NAD(+) biosynthesis; deamido-NAD(+) from nicotinate D-ribonucleotide: step 1/1. In terms of biological role, catalyzes the reversible adenylation of nicotinate mononucleotide (NaMN) to nicotinic acid adenine dinucleotide (NaAD). In Herpetosiphon aurantiacus (strain ATCC 23779 / DSM 785 / 114-95), this protein is Probable nicotinate-nucleotide adenylyltransferase.